The chain runs to 231 residues: MIGAVLKTLEYFDEKDVKVITTGDIGEGDGSLKIYDALKEIDDDLVIIHYIKPKISKIREINFSPKIIADAGGMYAAKAANIGDKFYLFLPDVGELAFLADEKASHPAYVRGFISEIDDNEVPKLIERDYKLKMPKYMVVKGETDYTIREEKIIDKIKEPKIKAMECIGGTGDTLTEIVSSLISVDFKTEEALSLGCKINRKLGEIANVNPNTQITEIINAIPKALENTLK.

This is an uncharacterized protein from Methanocaldococcus jannaschii (strain ATCC 43067 / DSM 2661 / JAL-1 / JCM 10045 / NBRC 100440) (Methanococcus jannaschii).